The chain runs to 387 residues: Succinate--CoA ligase [ADP-forming] subunit beta (387 aa).

An ATP-grasp domain is found at 9 to 244; that stretch reads KQLFAEYGIP…KTQEDETEVL (236 aa). ATP is bound by residues Lys46, 53-55, Gly102, and Glu107; that span reads GRG. Mg(2+)-binding residues include Asn199 and Asp213. Substrate-binding positions include Asn264 and 321 to 323; that span reads GIV.

This sequence belongs to the succinate/malate CoA ligase beta subunit family. As to quaternary structure, heterotetramer of two alpha and two beta subunits. It depends on Mg(2+) as a cofactor.

It carries out the reaction succinate + ATP + CoA = succinyl-CoA + ADP + phosphate. The enzyme catalyses GTP + succinate + CoA = succinyl-CoA + GDP + phosphate. It participates in carbohydrate metabolism; tricarboxylic acid cycle; succinate from succinyl-CoA (ligase route): step 1/1. In terms of biological role, succinyl-CoA synthetase functions in the citric acid cycle (TCA), coupling the hydrolysis of succinyl-CoA to the synthesis of either ATP or GTP and thus represents the only step of substrate-level phosphorylation in the TCA. The beta subunit provides nucleotide specificity of the enzyme and binds the substrate succinate, while the binding sites for coenzyme A and phosphate are found in the alpha subunit. The polypeptide is Succinate--CoA ligase [ADP-forming] subunit beta (Xylella fastidiosa (strain 9a5c)).